Reading from the N-terminus, the 327-residue chain is MSTVVEKSGEAKPGKVEVGVKLRGAEKVARIPVKIIPTEELPKKPDWIRVRIPVSPEVDRIKQLLRKHKLHSVCEEASCPNLGECFSGGTATFMIMGDICTRRCPFCDVGHGRPKPLDVDEPTNLAIAIADLRLKYVVITSVDRDDLRDGGAQHFADCLREIRKLSPGIQLETLVPDYRGRMDIALEITANEPPDVFNHNLETVPRLYRSSRPGSDFEWSLDLLQKFKQMVPHVPTKSGLMLGLGETDDEVIEVMQRMREHDIDMLTLGQYLQPSRNHLPVQRFVHPDTFAWFAEEGEKMGFKNVASGPLVRSSYHADQQAHGNKIG.

7 residues coordinate [4Fe-4S] cluster: cysteine 74, cysteine 79, cysteine 85, cysteine 100, cysteine 104, cysteine 107, and serine 314. Residues 86-303 form the Radical SAM core domain; sequence FSGGTATFMI…AEEGEKMGFK (218 aa).

Belongs to the radical SAM superfamily. Lipoyl synthase family. Requires [4Fe-4S] cluster as cofactor.

The protein localises to the cytoplasm. The enzyme catalyses [[Fe-S] cluster scaffold protein carrying a second [4Fe-4S](2+) cluster] + N(6)-octanoyl-L-lysyl-[protein] + 2 oxidized [2Fe-2S]-[ferredoxin] + 2 S-adenosyl-L-methionine + 4 H(+) = [[Fe-S] cluster scaffold protein] + N(6)-[(R)-dihydrolipoyl]-L-lysyl-[protein] + 4 Fe(3+) + 2 hydrogen sulfide + 2 5'-deoxyadenosine + 2 L-methionine + 2 reduced [2Fe-2S]-[ferredoxin]. Its pathway is protein modification; protein lipoylation via endogenous pathway; protein N(6)-(lipoyl)lysine from octanoyl-[acyl-carrier-protein]: step 2/2. Catalyzes the radical-mediated insertion of two sulfur atoms into the C-6 and C-8 positions of the octanoyl moiety bound to the lipoyl domains of lipoate-dependent enzymes, thereby converting the octanoylated domains into lipoylated derivatives. The polypeptide is Lipoyl synthase (Pseudomonas aeruginosa (strain LESB58)).